A 408-amino-acid chain; its full sequence is Peptidase T (408 aa).

Histidine 78 is a binding site for Zn(2+). Aspartate 80 is an active-site residue. Aspartate 140 contributes to the Zn(2+) binding site. Glutamate 173 (proton acceptor) is an active-site residue. Zn(2+)-binding residues include glutamate 174, aspartate 196, and histidine 379.

The protein belongs to the peptidase M20B family. Zn(2+) is required as a cofactor.

The protein resides in the cytoplasm. It carries out the reaction Release of the N-terminal residue from a tripeptide.. In terms of biological role, cleaves the N-terminal amino acid of tripeptides. The chain is Peptidase T from Escherichia fergusonii (strain ATCC 35469 / DSM 13698 / CCUG 18766 / IAM 14443 / JCM 21226 / LMG 7866 / NBRC 102419 / NCTC 12128 / CDC 0568-73).